A 227-amino-acid polypeptide reads, in one-letter code: Cytochrome c oxidase subunit 2 (227 aa).

The Mitochondrial intermembrane portion of the chain corresponds to 1–14; that stretch reads MAYPFQLGLXDATS. Residues 15–45 form a helical membrane-spanning segment; the sequence is PIMEELLHFHDHTLMIVFLISSLVLYIITLM. The Mitochondrial matrix portion of the chain corresponds to 46–59; it reads LTTKLTHTSTMDAQ. A helical membrane pass occupies residues 60-87; that stretch reads EVETVWTILPAIILILIALPSLRILYMM. The Mitochondrial intermembrane portion of the chain corresponds to 88 to 227; the sequence is DEINNPSLTV…YFETWSAVMV (140 aa). Residues H161, C196, E198, C200, H204, and M207 each coordinate Cu cation. A Mg(2+)-binding site is contributed by E198.

Belongs to the cytochrome c oxidase subunit 2 family. In terms of assembly, component of the cytochrome c oxidase (complex IV, CIV), a multisubunit enzyme composed of 14 subunits. The complex is composed of a catalytic core of 3 subunits MT-CO1, MT-CO2 and MT-CO3, encoded in the mitochondrial DNA, and 11 supernumerary subunits COX4I, COX5A, COX5B, COX6A, COX6B, COX6C, COX7A, COX7B, COX7C, COX8 and NDUFA4, which are encoded in the nuclear genome. The complex exists as a monomer or a dimer and forms supercomplexes (SCs) in the inner mitochondrial membrane with NADH-ubiquinone oxidoreductase (complex I, CI) and ubiquinol-cytochrome c oxidoreductase (cytochrome b-c1 complex, complex III, CIII), resulting in different assemblies (supercomplex SCI(1)III(2)IV(1) and megacomplex MCI(2)III(2)IV(2)). Found in a complex with TMEM177, COA6, COX18, COX20, SCO1 and SCO2. Interacts with TMEM177 in a COX20-dependent manner. Interacts with COX20. Interacts with COX16. Cu cation is required as a cofactor.

It localises to the mitochondrion inner membrane. It carries out the reaction 4 Fe(II)-[cytochrome c] + O2 + 8 H(+)(in) = 4 Fe(III)-[cytochrome c] + 2 H2O + 4 H(+)(out). Component of the cytochrome c oxidase, the last enzyme in the mitochondrial electron transport chain which drives oxidative phosphorylation. The respiratory chain contains 3 multisubunit complexes succinate dehydrogenase (complex II, CII), ubiquinol-cytochrome c oxidoreductase (cytochrome b-c1 complex, complex III, CIII) and cytochrome c oxidase (complex IV, CIV), that cooperate to transfer electrons derived from NADH and succinate to molecular oxygen, creating an electrochemical gradient over the inner membrane that drives transmembrane transport and the ATP synthase. Cytochrome c oxidase is the component of the respiratory chain that catalyzes the reduction of oxygen to water. Electrons originating from reduced cytochrome c in the intermembrane space (IMS) are transferred via the dinuclear copper A center (CU(A)) of subunit 2 and heme A of subunit 1 to the active site in subunit 1, a binuclear center (BNC) formed by heme A3 and copper B (CU(B)). The BNC reduces molecular oxygen to 2 water molecules using 4 electrons from cytochrome c in the IMS and 4 protons from the mitochondrial matrix. This is Cytochrome c oxidase subunit 2 (MT-CO2) from Vulpes corsac (Corsac fox).